The primary structure comprises 356 residues: Glycerol-1-phosphate dehydrogenase [NAD(P)+] (356 aa).

NAD(+) contacts are provided by residues 103–107 (GRSID) and 125–128 (TAAS). Residue D130 coordinates substrate. S134 is a binding site for NAD(+). Residue D177 coordinates substrate. 2 residues coordinate Zn(2+): D177 and H257. A substrate-binding site is contributed by H261. H273 serves as a coordination point for Zn(2+).

The protein belongs to the glycerol-1-phosphate dehydrogenase family. Requires Zn(2+) as cofactor.

It localises to the cytoplasm. The catalysed reaction is sn-glycerol 1-phosphate + NAD(+) = dihydroxyacetone phosphate + NADH + H(+). It catalyses the reaction sn-glycerol 1-phosphate + NADP(+) = dihydroxyacetone phosphate + NADPH + H(+). It functions in the pathway membrane lipid metabolism; glycerophospholipid metabolism. Its function is as follows. Catalyzes the NAD(P)H-dependent reduction of dihydroxyacetonephosphate (DHAP or glycerone phosphate) to glycerol 1-phosphate (G1P). The G1P thus generated is used as the glycerophosphate backbone of phospholipids in the cellular membranes of Archaea. This is Glycerol-1-phosphate dehydrogenase [NAD(P)+] from Methanosarcina barkeri (strain Fusaro / DSM 804).